Reading from the N-terminus, the 88-residue chain is Putative membrane protein insertion efficiency factor (88 aa).

The segment at 65 to 88 is disordered; sequence LDFVPPKKDKNDDSGHTCKAHHHH. Over residues 69-80 the composition is skewed to basic and acidic residues; that stretch reads PPKKDKNDDSGH.

This sequence belongs to the UPF0161 family.

It is found in the cell membrane. In terms of biological role, could be involved in insertion of integral membrane proteins into the membrane. The chain is Putative membrane protein insertion efficiency factor from Listeria innocua serovar 6a (strain ATCC BAA-680 / CLIP 11262).